The chain runs to 105 residues: Large ribosomal subunit protein uL24 (105 aa).

This sequence belongs to the universal ribosomal protein uL24 family. As to quaternary structure, part of the 50S ribosomal subunit.

Its function is as follows. One of two assembly initiator proteins, it binds directly to the 5'-end of the 23S rRNA, where it nucleates assembly of the 50S subunit. Functionally, one of the proteins that surrounds the polypeptide exit tunnel on the outside of the subunit. The sequence is that of Large ribosomal subunit protein uL24 from Wolbachia sp. subsp. Brugia malayi (strain TRS).